The chain runs to 76 residues: Kappa-actitoxin-Avd4o (76 aa).

Residues 1-19 form the signal peptide; sequence MNKALFLSLVVLCAAVVFA. Residues 20 to 33 constitute a propeptide that is removed on maturation; the sequence is AEDLQKAKHAPFKL. 3 disulfides stabilise this stretch: Cys37–Cys72, Cys39–Cys65, and Cys55–Cys73.

Belongs to the sea anemone type 3 (BDS) potassium channel toxin family. In terms of tissue distribution, experimental results show no expression in the ectodermal tissue from the distal and proximal tentacles, body wall, and oral disk. Since paralogs are expressed in this tissue, an expression of this toxin in this tissue is probable. The negative results could be explained by the very low abundance of EST sequences.

It localises to the secreted. Its subcellular location is the nematocyst. Functionally, blocks Kv3 voltage-gated potassium channels. Reduces blood pressure. This Anemonia viridis (Snakelocks anemone) protein is Kappa-actitoxin-Avd4o.